The primary structure comprises 211 residues: Type II secretion system protein J (211 aa).

Residues 1–7 (MRPRAAG) constitute a propeptide, leader sequence. F8 carries the N-methylphenylalanine modification. The chain crosses the membrane as a helical span at residues 8–28 (FTLIEVLLATMLLVGGLALAF).

The protein belongs to the GSP J family.

Its subcellular location is the membrane. Its function is as follows. Involved in a type II secretion system (T2SS, formerly general secretion pathway, GSP) for the export of proteins. In Xanthomonas campestris pv. campestris (strain ATCC 33913 / DSM 3586 / NCPPB 528 / LMG 568 / P 25), this protein is Type II secretion system protein J (xpsJ).